The following is a 418-amino-acid chain: ML-236A carboxylate methylbutanoyltransferase mlcH (418 aa).

R78 provides a ligand contact to monacolin J. S81 (acyl-ester intermediate) is an active-site residue. 3 residues coordinate monacolin J: R178, Y193, and Y262. G370 lines the 2-methylbutanoate pocket.

It belongs to the class-A beta-lactamase family.

It catalyses the reaction ML-236A carboxylate + (S)-2-methylbutanoyl-[2-methylbutanoate polyketide synthase] = mevinic carboxylate + holo-[2-methylbutanoate polyketide synthase]. It functions in the pathway polyketide biosynthesis. Compactin diketide synthase; part of the gene cluster that mediates the biosynthesis of compactin, also known as mevastatin or ML-236B, and which acts as a potent competitive inhibitor of HMG-CoA reductase. Compactin biosynthesis is performed in two stages. The first stage is catalyzed by the nonaketide synthase mlcA, which belongs to type I polyketide synthases and catalyzes the iterative nine-step formation of the polyketide. This PKS stage is completed by the action of dehydrogenase mlcG, which catalyzes the NADPH-dependent reduction of the unsaturated tetra-, penta- and heptaketide intermediates that arise during the mlcA-mediated biosynthesis of the nonaketide chain and leads to dihydro-ML-236C carboxylate. Covalently bound dihydro-ML-236C carboxylate is released from mlcA by the mlcF esterase. Conversion of dihydro-ML-236C carboxylate into ML-236A carboxylate is subsequently performed with the participation of molecular oxygen and P450 monoogygenase mlcC. Finally, mlcH performs the conversion of ML-236A carboxylate to ML-236B/compactin carboxylate through the addition of the side-chain diketide moiety produced by the diketide synthase mlcB. This is ML-236A carboxylate methylbutanoyltransferase mlcH from Penicillium citrinum.